A 209-amino-acid chain; its full sequence is 60S ribosomal subunit assembly/export protein loc-1 (209 aa).

2 disordered regions span residues 1–53 (MAPT…SKGR) and 135–209 (REAR…AAPE). Composition is skewed to basic and acidic residues over residues 20-33 (GSKDAERSRNDGVL) and 135-159 (REARRAEAEKKEAERKARLEETKDS). Residues 126–170 (IKARQMEEIREARRAEAEKKEAERKARLEETKDSLRKKRKRSKQS) adopt a coiled-coil conformation.

The protein belongs to the LOC1 family. As to quaternary structure, component of the 66S pre-ribosomal particle.

The protein localises to the nucleus. It is found in the nucleolus. Required for efficient assembly and nuclear export of the 60S ribosomal subunit. In Neurospora crassa (strain ATCC 24698 / 74-OR23-1A / CBS 708.71 / DSM 1257 / FGSC 987), this protein is 60S ribosomal subunit assembly/export protein loc-1 (loc-1).